A 505-amino-acid chain; its full sequence is MSEQHAQGADAVVDLNNELKTRREKLANLREQGIAFPNDFRRDHTSDQLHAEFDGKENEELEALNIEVAVAGRMMTRRIMGKASFVTLQDVGGRIQLYVARDDLPEGVYNEQFKKWDLGDILGAKGKLFKTKTGELSIHCTELRLLTKALRPLPDKFHGLQDQEARYRQRYLDLISNDESRNTFKVRSQILSGIRQFMVNRGFMEVETPMMQVIPGGAAARPFITHHNALDLDMYLRIAPELYLKRLVVGGFERVFEINRNFRNEGISVRHNPEFTMMELYMAYADYKDLIELTESLFRTLAQDILGKTEVTYGDVTLDFGKPFEKLTMREAIKKYRPETDMADLDNFDSAKAIAESIGIHVEKSWGLGRIVTEIFEEVAEAHLIQPTFITEYPAEVSPLARRNDINPEITDRFEFFIGGREIGNGFSELNDAEDQAQRFLDQVAAKDAGDDEAMFYDEDYVTALEHGLPPTAGLGIGIDRMVMLFTNSHTIRDVILFPAMRPVK.

E415 and E422 together coordinate Mg(2+).

The protein belongs to the class-II aminoacyl-tRNA synthetase family. Homodimer. Mg(2+) is required as a cofactor.

It localises to the cytoplasm. The enzyme catalyses tRNA(Lys) + L-lysine + ATP = L-lysyl-tRNA(Lys) + AMP + diphosphate. The polypeptide is Lysine--tRNA ligase (Shigella flexneri).